Consider the following 461-residue polypeptide: METLFNGTLTVGGRDQETTGFAWWAGNARLINLSGKLLGAHVAHAGLIVFWAGAMNLFEVSHFVPEKPMYEQGLILLPHIASLGYGVGPGGEVIDTFPYFVSGVLHLISSAVLGFGGVYHSLIGPETLEESFPFFGYIWKDKNKMTSILGYHLIMLGCGAWLLVLKAMYFGGIYDTWAPGGGDVRIITNPTTNFATIFGYLLRSPFGGDGWICSVDNLEDIIGGHIWIGTLCIFGGIWHIYTTPWPWARRAFVWSGEAYLSYSLGAIATMGFIACCFSWFNNTAYPSEFYGPTGPEASQAQAFTFLVRDQRLGANVASAQGPTGLGKYLMRSPTGEIIFGGETMRFWDFRGPWCEPLRGPNGLDLNKLKNDIQPWQERRAAEYMTHAPLGSLNSVGGVATEINAVNFVSPRSWLATSHFVLGFFFFVGHLWHAGRARAAAAGFEKGIDRVDEPVLSMRPLD.

Positions 1 to 2 are excised as a propeptide; the sequence is ME. Thr3 is subject to N-acetylthreonine. Phosphothreonine is present on Thr3. A run of 5 helical transmembrane segments spans residues 57-81, 122-143, 166-188, 243-263, and 279-300; these read LFEVSHFVPEKPMYEQGLILLPHIA, LIGPETLEESFPFFGYIWKDKN, KAMYFGGIYDTWAPGGGDVRIIT, TPWPWARRAFVWSGEAYLSYS, and WFNNTAYPSEFYGPTGPEASQA. Glu355 contacts [CaMn4O5] cluster. A helical membrane pass occupies residues 435 to 459; it reads RARAAAAGFEKGIDRVDEPVLSMRP.

This sequence belongs to the PsbB/PsbC family. PsbC subfamily. PSII is composed of 1 copy each of membrane proteins PsbA, PsbB, PsbC, PsbD, PsbE, PsbF, PsbH, PsbI, PsbJ, PsbK, PsbL, PsbM, PsbT, PsbX, PsbY, PsbZ, Psb30/Ycf12, at least 3 peripheral proteins of the oxygen-evolving complex and a large number of cofactors. It forms dimeric complexes. Requires Binds multiple chlorophylls and provides some of the ligands for the Ca-4Mn-5O cluster of the oxygen-evolving complex. It may also provide a ligand for a Cl- that is required for oxygen evolution. PSII binds additional chlorophylls, carotenoids and specific lipids. as cofactor.

Its subcellular location is the plastid. It localises to the chloroplast thylakoid membrane. Its function is as follows. One of the components of the core complex of photosystem II (PSII). It binds chlorophyll and helps catalyze the primary light-induced photochemical processes of PSII. PSII is a light-driven water:plastoquinone oxidoreductase, using light energy to abstract electrons from H(2)O, generating O(2) and a proton gradient subsequently used for ATP formation. The protein is Photosystem II CP43 reaction center protein of Chlamydomonas moewusii (Chlamydomonas eugametos).